We begin with the raw amino-acid sequence, 678 residues long: DNA ligase (678 aa).

NAD(+) is bound by residues Asp34–Asp38, Ser83–Leu84, and Glu114. The active-site N6-AMP-lysine intermediate is the Lys116. 4 residues coordinate NAD(+): Arg137, Glu176, Lys293, and Lys317. The Zn(2+) site is built by Cys411, Cys414, Cys429, and Cys435. A BRCT domain is found at Pro594–Ser678.

Belongs to the NAD-dependent DNA ligase family. LigA subfamily. Requires Mg(2+) as cofactor. It depends on Mn(2+) as a cofactor.

It catalyses the reaction NAD(+) + (deoxyribonucleotide)n-3'-hydroxyl + 5'-phospho-(deoxyribonucleotide)m = (deoxyribonucleotide)n+m + AMP + beta-nicotinamide D-nucleotide.. Functionally, DNA ligase that catalyzes the formation of phosphodiester linkages between 5'-phosphoryl and 3'-hydroxyl groups in double-stranded DNA using NAD as a coenzyme and as the energy source for the reaction. It is essential for DNA replication and repair of damaged DNA. The protein is DNA ligase of Acinetobacter baumannii (strain SDF).